The chain runs to 213 residues: MELHVLNHPLIEHKLTVLRDKNTPSSTFRELVSELVSLEAYEATRNLEVVDKPIETPVAPMVGKQIAKPRPIIVPVLRAGLGMLDGMTRMMPSAEVGFLGMKRDEEHPTQQITYANRLPDDLSGRQCFLIDPMLATGGTLVTATHYLMDKGAKDVTAICIIAAPEGIKFVEENIREDINFRVVVCGVDEGLNGKSYIVPGLGDAGDRLYGVID.

Residues Arg78, Arg103, and 131–139 (DPMLATGGT) each bind 5-phospho-alpha-D-ribose 1-diphosphate. Residues Ile197 and 202–204 (GDA) each bind uracil. A 5-phospho-alpha-D-ribose 1-diphosphate-binding site is contributed by Asp203.

This sequence belongs to the UPRTase family. The cofactor is Mg(2+).

It catalyses the reaction UMP + diphosphate = 5-phospho-alpha-D-ribose 1-diphosphate + uracil. The protein operates within pyrimidine metabolism; UMP biosynthesis via salvage pathway; UMP from uracil: step 1/1. Allosterically activated by GTP. Functionally, catalyzes the conversion of uracil and 5-phospho-alpha-D-ribose 1-diphosphate (PRPP) to UMP and diphosphate. In Bifidobacterium animalis subsp. lactis (strain AD011), this protein is Uracil phosphoribosyltransferase.